A 328-amino-acid polypeptide reads, in one-letter code: GMP reductase (328 aa).

The Thioimidate intermediate role is filled by cysteine 176. 205 to 228 (IIADGGIRTHGDIAKSVRFGATMV) is a binding site for NADP(+).

Belongs to the IMPDH/GMPR family. GuaC type 2 subfamily.

The enzyme catalyses IMP + NH4(+) + NADP(+) = GMP + NADPH + 2 H(+). Functionally, catalyzes the irreversible NADPH-dependent deamination of GMP to IMP. It functions in the conversion of nucleobase, nucleoside and nucleotide derivatives of G to A nucleotides, and in maintaining the intracellular balance of A and G nucleotides. This chain is GMP reductase, found in Shouchella clausii (strain KSM-K16) (Alkalihalobacillus clausii).